The sequence spans 297 residues: Translocase of chloroplast 33, chloroplastic (297 aa).

In terms of domain architecture, AIG1-type G spans 34-258; it reads MNSMTVLVLG…HVDKKMVDGS (225 aa). Residues 37–53 form a helical membrane-spanning segment; sequence MTVLVLGKGGVGKSSTV. GTP is bound by residues 46–51 and 65–70; these read GVGKSS and SPFQAE. Mg(2+) is bound by residues Ser-50 and Gln-68. 2 homodimerization regions span residues 65–68 and 125–130; these read SPFQ and RLDVYR. Residue His-160 participates in GTP binding. A Phosphoserine modification is found at Ser-181. Residue 208–209 coordinates GTP; that stretch reads EN.

It belongs to the TRAFAC class TrmE-Era-EngA-EngB-Septin-like GTPase superfamily. AIG1/Toc34/Toc159-like paraseptin GTPase family. TOC34 subfamily. Homodimer, heterodimer with TOC34 and TOC159, and monomer. The homodimerization and the dimerization with TOC159 require the binding of GTP on Arg-130, and a hypothetical coGAP factor. The dimeric form has a higher GTPase activity than the monomeric form. Part of the TOC core complex that includes 1 protein for the specific recognition of transit peptides surrounded by a ring composed of four proteins forming translocation channels, and four to five GTP-binding proteins providing energy. This core complex can interact with components of the TIC complex to form a larger import complex. Chloroplastic protein precursor such as prSS (precursor of the RuBisCO small subunit) interacts with these complexes. The TOC complex contains a specific subset of polar lipids such as digalactosyldiacylglyceride (DGDG), phosphatidylcholine (PC) and phosphatidylglycerol (PG). Interacts at least with TOC75-3. Forms large complexes including TOC33, pPORA and OEP161 during pPORA import into plastids at the plastid envelope membrane. Interacts with SP1. The cofactor is Mg(2+). Phosphorylated by a kinase present in the outer envelope of chloroplast. When Ser-181 is phosphorylated, the binding to preprotein, GTP and GDP is inhibited, and thus, GTPase activity is repressed. As to expression, mostly expressed in seedlings and flowers, and, to a lower extent, in roots, stems, and leaves.

Its subcellular location is the plastid. It localises to the chloroplast outer membrane. Functionally, GTPase involved in protein precursor import into chloroplasts. Seems to recognize chloroplast-destined precursor proteins and regulate their presentation to the translocation channel through GTP hydrolysis. Binds GTP, GDP, XTP, but not ATP. Probably specialized in the import of nuclear encoded photosynthetic preproteins from the cytoplasm to the chloroplast, especially during early development stages. This chain is Translocase of chloroplast 33, chloroplastic (TOC33), found in Arabidopsis thaliana (Mouse-ear cress).